The primary structure comprises 153 residues: Bacteriohemerythrin (153 aa).

7 residues coordinate Fe cation: histidine 21, histidine 57, glutamate 61, histidine 76, histidine 80, histidine 115, and aspartate 120.

The protein belongs to the hemerythrin family. In terms of assembly, monomer.

Its function is as follows. Oxygen-binding protein. May be involved in a storage mechanism or for delivery to oxygen-requiring enzymes. The oxygen-binding site contains two iron atoms. This is Bacteriohemerythrin from Pseudomonas paraeruginosa (strain DSM 24068 / PA7) (Pseudomonas aeruginosa (strain PA7)).